Reading from the N-terminus, the 399-residue chain is Stearoyl-[acyl-carrier-protein] 9-desaturase, seed specific, chloroplastic (399 aa).

The N-terminal 34 residues, M1–L34, are a transit peptide targeting the chloroplast. The Fe cation site is built by E141, E179, H182, E232, E265, and H268.

This sequence belongs to the fatty acid desaturase type 2 family. As to quaternary structure, homodimer. Fe(2+) is required as a cofactor. Developing seeds.

The protein resides in the plastid. It localises to the chloroplast. It catalyses the reaction octadecanoyl-[ACP] + 2 reduced [2Fe-2S]-[ferredoxin] + O2 + 2 H(+) = (9Z)-octadecenoyl-[ACP] + 2 oxidized [2Fe-2S]-[ferredoxin] + 2 H2O. It participates in lipid metabolism; fatty acid metabolism. Its function is as follows. Converts stearoyl-ACP to oleoyl-ACP by introduction of a cis double bond between carbons Delta(9) and Delta(10) of the acyl chain. This chain is Stearoyl-[acyl-carrier-protein] 9-desaturase, seed specific, chloroplastic, found in Brassica napus (Rape).